Reading from the N-terminus, the 363-residue chain is FMNH(2)-dependent dimethylsulfone monooxygenase (363 aa).

This sequence belongs to the SsuD family.

The enzyme catalyses dimethyl sulfone + FMNH2 + O2 = methanesulfinate + FMN + formaldehyde + H2O + 2 H(+). Functionally, involved in the dimethyl sulfide degradation pathway. Catalyzes the oxidation of dimethylsulfone (DMSO2) to yield methanesulfinate, which is oxidized spontaneously to methanesulfonate in the presence of dioxygen and FMNH(2). The polypeptide is FMNH(2)-dependent dimethylsulfone monooxygenase (Pseudomonas putida (Arthrobacter siderocapsulatus)).